The primary structure comprises 303 residues: GMP synthase [glutamine-hydrolyzing] subunit B (303 aa).

The 183-residue stretch at 1-183 folds into the GMPS ATP-PPase domain; that stretch reads MDVEKFVENA…LGLPKEISER (183 aa). 28–34 is an ATP binding site; sequence SGGVDSS.

Heterodimer composed of a glutamine amidotransferase subunit (A) and a GMP-binding subunit (B).

It catalyses the reaction XMP + L-glutamine + ATP + H2O = GMP + L-glutamate + AMP + diphosphate + 2 H(+). It participates in purine metabolism; GMP biosynthesis; GMP from XMP (L-Gln route): step 1/1. Functionally, catalyzes the synthesis of GMP from XMP. In Archaeoglobus fulgidus (strain ATCC 49558 / DSM 4304 / JCM 9628 / NBRC 100126 / VC-16), this protein is GMP synthase [glutamine-hydrolyzing] subunit B (guaAB).